Consider the following 390-residue polypeptide: Precorrin-6Y C(5,15)-methyltransferase [decarboxylating] (390 aa).

It belongs to the precorrin methyltransferase family.

The enzyme catalyses precorrin-6B + 2 S-adenosyl-L-methionine = precorrin-8X + 2 S-adenosyl-L-homocysteine + CO2 + 3 H(+). The protein operates within cofactor biosynthesis; adenosylcobalamin biosynthesis; cob(II)yrinate a,c-diamide from precorrin-2 (aerobic route): step 7/10. Catalyzes the methylation of both C-5 and C-15 in precorrin-6Y to form precorrin-8X. In Mycobacterium tuberculosis (strain CDC 1551 / Oshkosh), this protein is Precorrin-6Y C(5,15)-methyltransferase [decarboxylating] (cobL).